The following is a 357-amino-acid chain: Probable dual-specificity RNA methyltransferase RlmN (357 aa).

Glu-92 functions as the Proton acceptor in the catalytic mechanism. In terms of domain architecture, Radical SAM core spans 98-336; it reads HKYGLSVCVT…CGVRLEHGTD (239 aa). Cysteines 105 and 341 form a disulfide. 3 residues coordinate [4Fe-4S] cluster: Cys-112, Cys-116, and Cys-119. S-adenosyl-L-methionine-binding positions include 164 to 165, Ser-196, 219 to 221, and Asn-297; these read GE and SLH. Cys-341 functions as the S-methylcysteine intermediate in the catalytic mechanism.

This sequence belongs to the radical SAM superfamily. RlmN family. [4Fe-4S] cluster is required as a cofactor.

It localises to the cytoplasm. The catalysed reaction is adenosine(2503) in 23S rRNA + 2 reduced [2Fe-2S]-[ferredoxin] + 2 S-adenosyl-L-methionine = 2-methyladenosine(2503) in 23S rRNA + 5'-deoxyadenosine + L-methionine + 2 oxidized [2Fe-2S]-[ferredoxin] + S-adenosyl-L-homocysteine. It carries out the reaction adenosine(37) in tRNA + 2 reduced [2Fe-2S]-[ferredoxin] + 2 S-adenosyl-L-methionine = 2-methyladenosine(37) in tRNA + 5'-deoxyadenosine + L-methionine + 2 oxidized [2Fe-2S]-[ferredoxin] + S-adenosyl-L-homocysteine. Functionally, specifically methylates position 2 of adenine 2503 in 23S rRNA and position 2 of adenine 37 in tRNAs. The polypeptide is Probable dual-specificity RNA methyltransferase RlmN (Exiguobacterium sibiricum (strain DSM 17290 / CCUG 55495 / CIP 109462 / JCM 13490 / 255-15)).